Reading from the N-terminus, the 147-residue chain is Ubiquitin-conjugating enzyme E2 5A (147 aa).

Basic and acidic residues predominate over residues 1–15 (MASKRIQKELKDLQK). The tract at residues 1–24 (MASKRIQKELKDLQKDPPTSCSAG) is disordered. The 147-residue stretch at 1–147 (MASKRIQKEL…ARTWTQRYAM (147 aa)) folds into the UBC core domain. Cysteine 85 serves as the catalytic Glycyl thioester intermediate.

Belongs to the ubiquitin-conjugating enzyme family.

The enzyme catalyses S-ubiquitinyl-[E1 ubiquitin-activating enzyme]-L-cysteine + [E2 ubiquitin-conjugating enzyme]-L-cysteine = [E1 ubiquitin-activating enzyme]-L-cysteine + S-ubiquitinyl-[E2 ubiquitin-conjugating enzyme]-L-cysteine.. The protein operates within protein modification; protein ubiquitination. Functionally, E2 conjugating enzyme that associates with the E3 ubiquitin-protein ligase EL5 to mediate ubiquitination of target proteins. The protein is Ubiquitin-conjugating enzyme E2 5A (UBC5A) of Oryza sativa subsp. japonica (Rice).